The following is a 337-amino-acid chain: 1-aminocyclopropane-1-carboxylate deaminase (337 aa).

K50 bears the N6-(pyridoxal phosphate)lysine mark. The Nucleophile role is filled by S77.

It belongs to the ACC deaminase/D-cysteine desulfhydrase family. In terms of assembly, homotrimer. It depends on pyridoxal 5'-phosphate as a cofactor.

It carries out the reaction 1-aminocyclopropane-1-carboxylate + H2O = 2-oxobutanoate + NH4(+). Functionally, catalyzes a cyclopropane ring-opening reaction, the irreversible conversion of 1-aminocyclopropane-1-carboxylate (ACC) to ammonia and alpha-ketobutyrate. Allows growth on ACC as a nitrogen source. The protein is 1-aminocyclopropane-1-carboxylate deaminase of Rhizobium rhizogenes (strain K84 / ATCC BAA-868) (Agrobacterium radiobacter).